A 333-amino-acid chain; its full sequence is NADH-quinone oxidoreductase subunit H (333 aa).

8 helical membrane-spanning segments follow: residues Phe15–Tyr35, Phe88–Phe108, Ile117–Thr137, Ile159–Leu179, Val191–Glu211, Phe241–Phe261, Phe273–Trp293, and Val313–Phe333.

The protein belongs to the complex I subunit 1 family. As to quaternary structure, NDH-1 is composed of 14 different subunits. Subunits NuoA, H, J, K, L, M, N constitute the membrane sector of the complex.

The protein localises to the cell membrane. The enzyme catalyses a quinone + NADH + 5 H(+)(in) = a quinol + NAD(+) + 4 H(+)(out). NDH-1 shuttles electrons from NADH, via FMN and iron-sulfur (Fe-S) centers, to quinones in the respiratory chain. The immediate electron acceptor for the enzyme in this species is believed to be ubiquinone. Couples the redox reaction to proton translocation (for every two electrons transferred, four hydrogen ions are translocated across the cytoplasmic membrane), and thus conserves the redox energy in a proton gradient. This subunit may bind ubiquinone. The polypeptide is NADH-quinone oxidoreductase subunit H (Bacillus cytotoxicus (strain DSM 22905 / CIP 110041 / 391-98 / NVH 391-98)).